Consider the following 846-residue polypeptide: MAP7 domain-containing protein 1 (846 aa).

Disordered stretches follow at residues M1–K153 and E186–K210. Residues E24–P41 show a composition bias toward pro residues. Residues T49 and T53 each carry the phosphothreonine modification. At S95 the chain carries Phosphoserine. T99 bears the Phosphothreonine mark. Residues R113–P123 show a composition bias toward low complexity. S115 and S118 each carry phosphoserine. A Phosphothreonine modification is found at T120. Residues S125 and S127 each carry the phosphoserine modification. The stretch at A130–T224 forms a coiled coil. Basic and acidic residues predominate over residues Q132 to K153. S256, S275, S315, S368, and S401 each carry phosphoserine. The tract at residues T318–G816 is disordered. Positions R407 to R437 are enriched in basic and acidic residues. Residues V414–Q443 are a coiled coil. S444, S448, S454, and S460 each carry phosphoserine. The span at S460 to S471 shows a compositional bias: low complexity. K462 participates in a covalent cross-link: Glycyl lysine isopeptide (Lys-Gly) (interchain with G-Cter in SUMO2). S479 and S496 each carry phosphoserine. Positions S479–P497 are enriched in pro residues. Over residues P523–P539 the composition is skewed to basic and acidic residues. Residues P542–A556 show a composition bias toward pro residues. Phosphoserine occurs at positions 544, 548, and 552. Position 554 is a phosphothreonine (T554). The segment covering P568–A579 has biased composition (low complexity). Residues T599–E740 are a coiled coil. Residues T600 to E740 are compositionally biased toward basic and acidic residues. T818 carries the phosphothreonine modification.

This sequence belongs to the MAP7 family.

Its subcellular location is the cytoplasm. The protein localises to the cytoskeleton. The protein resides in the spindle. It is found in the microtubule organizing center. It localises to the centrosome. Its subcellular location is the midbody. In terms of biological role, microtubule-stabilizing protein involved in the control of cell motility and neurite outgrowth. Facilitate microtubule stabilization through the maintenance of acetylated stable microtubules. This Mus musculus (Mouse) protein is MAP7 domain-containing protein 1 (Map7d1).